The sequence spans 195 residues: Probable DNA-directed RNA polymerase subunit delta (195 aa).

The region spanning 14–81 is the HTH HARE-type domain; it reads LSMIEVAHAI…GDNTWGLRAW (68 aa). Positions 91–195 are disordered; sequence TVGETEDEED…DEEDKEDDEE (105 aa). Composition is skewed to acidic residues over residues 116 to 171 and 179 to 195; these read TDDD…EDQL and FGDD…DDEE.

It belongs to the RpoE family. As to quaternary structure, RNAP is composed of a core of 2 alpha, a beta and a beta' subunits. The core is associated with a delta subunit and one of several sigma factors.

Its function is as follows. Participates in both the initiation and recycling phases of transcription. In the presence of the delta subunit, RNAP displays an increased specificity of transcription, a decreased affinity for nucleic acids, and an increased efficiency of RNA synthesis because of enhanced recycling. In Limosilactobacillus fermentum (strain NBRC 3956 / LMG 18251) (Lactobacillus fermentum), this protein is Probable DNA-directed RNA polymerase subunit delta.